Reading from the N-terminus, the 78-residue chain is Large ribosomal subunit protein bL31 (78 aa).

Residues Cys16, Cys18, Cys38, and Cys41 each coordinate Zn(2+).

This sequence belongs to the bacterial ribosomal protein bL31 family. Type A subfamily. Part of the 50S ribosomal subunit. Requires Zn(2+) as cofactor.

Its function is as follows. Binds the 23S rRNA. The polypeptide is Large ribosomal subunit protein bL31 (Frankia casuarinae (strain DSM 45818 / CECT 9043 / HFP020203 / CcI3)).